We begin with the raw amino-acid sequence, 262 residues long: Nickel import ATP-binding protein NikD (262 aa).

Residues 6-249 form the ABC transporter domain; it reads LAIEGLTATT…PGHEVTRMLV (244 aa). 42–49 lines the ATP pocket; sequence GASGSGKS.

It belongs to the ABC transporter superfamily. Nickel importer (TC 3.A.1.5.3) family. As to quaternary structure, the complex is composed of two ATP-binding proteins (NikD and NikE), two transmembrane proteins (NikB and NikC) and a solute-binding protein (NikA).

The protein localises to the cell inner membrane. The enzyme catalyses Ni(2+)(out) + ATP + H2O = Ni(2+)(in) + ADP + phosphate + H(+). Functionally, part of the ABC transporter complex NikABCDE involved in nickel import. Responsible for energy coupling to the transport system. This Brucella suis biovar 1 (strain 1330) protein is Nickel import ATP-binding protein NikD.